The following is a 107-amino-acid chain: Ig kappa chain V-VI region NQ6-8.3.1 (107 aa).

The tract at residues 1-23 (QIVLTQSPAIMSASPGQKVTMTC) is framework-1. A disulfide bridge links C23 with C87. A complementarity-determining-1 region spans residues 24-33 (SASSSVSYMH). Residues 34–48 (WYQQKSGTSPKRWIY) form a framework-2 region. The segment at 49–55 (DTSKLAS) is complementarity-determining-2. The tract at residues 56 to 87 (GXPARFSGSGSATSYSLTITSMQAEDAATYYC) is framework-3. The complementarity-determining-3 stretch occupies residues 88–96 (QQWSSNPLT). Positions 97–106 (FGAGTKLELK) are framework-4.

In terms of biological role, anti-2-phenyl oxazolone (PHOX) Antibody. The polypeptide is Ig kappa chain V-VI region NQ6-8.3.1 (Mus musculus (Mouse)).